Here is a 203-residue protein sequence, read N- to C-terminus: ATP-dependent Clp protease proteolytic subunit (203 aa).

Serine 100 acts as the Nucleophile in catalysis. Residue histidine 125 is part of the active site.

This sequence belongs to the peptidase S14 family. As to quaternary structure, component of the chloroplastic Clp protease core complex.

Its subcellular location is the plastid. The protein resides in the chloroplast stroma. The catalysed reaction is Hydrolysis of proteins to small peptides in the presence of ATP and magnesium. alpha-casein is the usual test substrate. In the absence of ATP, only oligopeptides shorter than five residues are hydrolyzed (such as succinyl-Leu-Tyr-|-NHMec, and Leu-Tyr-Leu-|-Tyr-Trp, in which cleavage of the -Tyr-|-Leu- and -Tyr-|-Trp bonds also occurs).. In terms of biological role, cleaves peptides in various proteins in a process that requires ATP hydrolysis. Has a chymotrypsin-like activity. Plays a major role in the degradation of misfolded proteins. This Dioscorea elephantipes (Elephant's foot yam) protein is ATP-dependent Clp protease proteolytic subunit.